Here is a 328-residue protein sequence, read N- to C-terminus: Ribosomal RNA large subunit methyltransferase F (328 aa).

The disordered stretch occupies residues 1–31 (MTDTRKPPRKKPQRPAKPAAPREKATLHPRN).

The protein belongs to the methyltransferase superfamily. METTL16/RlmF family.

It localises to the cytoplasm. It carries out the reaction adenosine(1618) in 23S rRNA + S-adenosyl-L-methionine = N(6)-methyladenosine(1618) in 23S rRNA + S-adenosyl-L-homocysteine + H(+). Its function is as follows. Specifically methylates the adenine in position 1618 of 23S rRNA. In Pseudomonas syringae pv. syringae (strain B728a), this protein is Ribosomal RNA large subunit methyltransferase F.